Consider the following 184-residue polypeptide: ATP synthase subunit b, chloroplastic (184 aa).

The helical transmembrane segment at Ile26–Val48 threads the bilayer.

It belongs to the ATPase B chain family. As to quaternary structure, F-type ATPases have 2 components, F(1) - the catalytic core - and F(0) - the membrane proton channel. F(1) has five subunits: alpha(3), beta(3), gamma(1), delta(1), epsilon(1). F(0) has four main subunits: a(1), b(1), b'(1) and c(10-14). The alpha and beta chains form an alternating ring which encloses part of the gamma chain. F(1) is attached to F(0) by a central stalk formed by the gamma and epsilon chains, while a peripheral stalk is formed by the delta, b and b' chains.

It localises to the plastid. The protein resides in the chloroplast thylakoid membrane. In terms of biological role, f(1)F(0) ATP synthase produces ATP from ADP in the presence of a proton or sodium gradient. F-type ATPases consist of two structural domains, F(1) containing the extramembraneous catalytic core and F(0) containing the membrane proton channel, linked together by a central stalk and a peripheral stalk. During catalysis, ATP synthesis in the catalytic domain of F(1) is coupled via a rotary mechanism of the central stalk subunits to proton translocation. Functionally, component of the F(0) channel, it forms part of the peripheral stalk, linking F(1) to F(0). In Calycanthus floridus var. glaucus (Eastern sweetshrub), this protein is ATP synthase subunit b, chloroplastic.